We begin with the raw amino-acid sequence, 133 residues long: Antifungal protein ginkbilobin-like protein 1 (133 aa).

A signal peptide spans 1–24 (MSMGSFGFALAVMVLAVLVASAAG). Residues 28-133 (TNFVSSACNT…CFIRYEQYSI (106 aa)) form the Gnk2-homologous domain. Cystine bridges form between C35–C111, C87–C96, and C99–C124. Residue N36 coordinates alpha-D-mannopyranose. 2 residues coordinate alpha-D-mannopyranose: R118 and E129.

Its function is as follows. Exerts antifungal activity through its carbohydrate-binding specificity. This Picea sitchensis (Sitka spruce) protein is Antifungal protein ginkbilobin-like protein 1.